The following is a 151-amino-acid chain: Probable flavodoxin 2 (151 aa).

In terms of domain architecture, Flavodoxin-like spans isoleucine 4–alanine 144. FMN contacts are provided by residues threonine 10–asparagine 14 and valine 88–leucine 119.

It belongs to the flavodoxin family. It depends on FMN as a cofactor.

Functionally, low-potential electron donor to a number of redox enzymes. The sequence is that of Probable flavodoxin 2 (ykuP) from Bacillus subtilis (strain 168).